The following is a 456-amino-acid chain: Divalent metal cation transporter MntH (456 aa).

11 helical membrane-spanning segments follow: residues 47-67 (ALSF…PGNW), 77-97 (FGYA…LLQA), 123-143 (AWPL…AEVI), 151-171 (LLFG…VLLV), 184-204 (ALII…IIMA), 227-247 (MLYI…LYLH), 276-296 (IALT…AASF), 316-336 (PLLG…CCGL), 369-389 (FVAI…GTTE), 392-412 (ILSQ…LVIF), and 422-442 (LAAA…IVVL).

This sequence belongs to the NRAMP family.

Its subcellular location is the cell inner membrane. Its function is as follows. H(+)-stimulated, divalent metal cation uptake system. In Brucella suis biovar 1 (strain 1330), this protein is Divalent metal cation transporter MntH.